Consider the following 445-residue polypeptide: UDP-N-acetylmuramate--L-alanine ligase (445 aa).

Residue Gly113–Ser119 participates in ATP binding.

Belongs to the MurCDEF family.

Its subcellular location is the cytoplasm. The enzyme catalyses UDP-N-acetyl-alpha-D-muramate + L-alanine + ATP = UDP-N-acetyl-alpha-D-muramoyl-L-alanine + ADP + phosphate + H(+). It participates in cell wall biogenesis; peptidoglycan biosynthesis. Functionally, cell wall formation. In Enterococcus faecalis (strain ATCC 700802 / V583), this protein is UDP-N-acetylmuramate--L-alanine ligase.